The following is a 397-amino-acid chain: Acetate kinase 2 (397 aa).

Residue asparagine 8 coordinates Mg(2+). Lysine 15 lines the ATP pocket. Residue arginine 89 participates in substrate binding. Aspartate 146 serves as the catalytic Proton donor/acceptor. Residues 206–210, 281–283, and 329–333 contribute to the ATP site; these read HLGNG, DFR, and GVGEN. Glutamate 380 serves as a coordination point for Mg(2+).

This sequence belongs to the acetokinase family. As to quaternary structure, homodimer. The cofactor is Mg(2+). Mn(2+) is required as a cofactor.

The protein localises to the cytoplasm. The enzyme catalyses acetate + ATP = acetyl phosphate + ADP. It participates in metabolic intermediate biosynthesis; acetyl-CoA biosynthesis; acetyl-CoA from acetate: step 1/2. In terms of biological role, catalyzes the formation of acetyl phosphate from acetate and ATP. Can also catalyze the reverse reaction. The polypeptide is Acetate kinase 2 (Listeria monocytogenes serovar 1/2a (strain ATCC BAA-679 / EGD-e)).